A 368-amino-acid chain; its full sequence is MELQANLENVLQKVNNFINIDAKRQIYAAHFDNLKNTIFNELRKNEVLAYLFNGFQLGGSYGDNVKVTVPNEYDLVFNIKFPEQPLIIVTADHELPGNVFLDFTRVIHKIAKEKQHEKILQHLKQWLDDENYLKVEKFQWFLRSCFIDVLTKMNFKITFKGRTSSLRYSREGPAHTIKVTESLNFDYSVDFVPGILLNANQCVTSNIVGQWEAIPKPTPTNNHLYKSFRASFYRQEQKIIKNQQQLKNVYRMMKKFRDSKTNMLKMKSYFIKTLFLWKSSRENVSYWSKPLTEIIIDMFKDMEKSLREEKLPFYWDRKLNLYDNYQPRLMREMLNCVESARETLEKAAKELTLPLQKRVFCIFCKLKI.

ATP contacts are provided by residues S60 and 72–74 (EYD). Mg(2+) is bound by residues E72, D74, and D190. Residues D190 and 229–236 (RASFYRQE) contribute to the GTP site. Residues 233–236 (YRQE), K254, and 268–272 (SYFIK) each bind ATP.

This sequence belongs to the mab-21 family. Mg(2+) is required as a cofactor. Requires Mn(2+) as cofactor.

It carries out the reaction GTP + ATP = 3',2'-cGAMP + 2 diphosphate. The catalysed reaction is GTP + ATP = pppA(2'-5')pG + diphosphate. It catalyses the reaction pppA(2'-5')pG = 3',2'-cGAMP + diphosphate. With respect to regulation, the enzyme activity is specifically activated by double-stranded RNA (dsRNA). Its function is as follows. Nucleotidyltransferase that catalyzes the formation of cyclic GMP-AMP (3',2'-cGAMP) from ATP and GTP and plays a key role in innate immunity. Synthesizes 3',2'-cGAMP in a two-step reaction through production of the linear intermediate pppA(2'-5')pG. Acts as a key sensor of double-stranded RNA (dsRNA), the presence of dsRNA in the cytoplasm being a danger signal that triggers the immune responses. Directly binds dsRNA, activating the nucleotidyltransferase activity, leading to synthesis of 3',2'-cGAMP, a second messenger that binds to and activates Sting, thereby triggering the antiviral immune response via activation of the NF-kappa-B transcription factor Rel (Relish). The sequence is that of Cyclic GMP-AMP synthase-like receptor from Lucilia cuprina (Green bottle fly).